Consider the following 117-residue polypeptide: Nuclear transition protein 2 (117 aa).

Residues 1-117 (MDTKMQSLPT…KRRSSGRRYK (117 aa)) are disordered. Over residues 7-26 (SLPTTHPHPHSSSRPQSHTS) the composition is skewed to low complexity. Zn(2+) contacts are provided by His-12, His-14, His-16, His-24, Cys-32, Cys-34, Cys-38, and Cys-41. Low complexity predominate over residues 44–53 (AGHAGSSSSP). 2 stretches are compositionally biased toward basic residues: residues 60 to 77 (KHPK…RPSH) and 93 to 117 (SKRK…RRYK). Positions 90–98 (GKVSKRKAV) match the Nuclear localization signal motif. At Ser-112 the chain carries Phosphoserine.

This sequence belongs to the nuclear transition protein 2 family.

The protein resides in the nucleus. It localises to the chromosome. Its function is as follows. Plays a key role in the replacement of histones to protamine in the elongating spermatids of mammals. In condensing spermatids, loaded onto the nucleosomes, where it promotes the recruitment and processing of protamines, which are responsible for histone eviction. The histone H2AB1-H2BC1/TH2B dimer is required for loading of TNP2 onto chromatin. The chain is Nuclear transition protein 2 from Mus musculus (Mouse).